The sequence spans 440 residues: Chromosomal replication initiator protein DnaA (440 aa).

Positions 1 to 74 are domain I, interacts with DnaA modulators; it reads MNPSQILENL…VQSGNKAIIN (74 aa). A domain II region spans residues 74-99; the sequence is NIQAQSAKQSNKSTKIDIAHIKAQST. The domain III, AAA+ region stretch occupies residues 100-316; it reads ILNPSFTFDS…GIIISLNAYA (217 aa). 4 residues coordinate ATP: Gly146, Gly148, Lys149, and Thr150. The tract at residues 317-440 is domain IV, binds dsDNA; that stretch reads TILGQEITLE…KNKILVKSQS (124 aa).

This sequence belongs to the DnaA family. As to quaternary structure, oligomerizes as a right-handed, spiral filament on DNA at oriC.

The protein localises to the cytoplasm. In terms of biological role, plays an essential role in the initiation and regulation of chromosomal replication. ATP-DnaA binds to the origin of replication (oriC) to initiate formation of the DNA replication initiation complex once per cell cycle. Binds the DnaA box (a 9 base pair repeat at the origin) and separates the double-stranded (ds)DNA. Forms a right-handed helical filament on oriC DNA; dsDNA binds to the exterior of the filament while single-stranded (ss)DNA is stabiized in the filament's interior. The ATP-DnaA-oriC complex binds and stabilizes one strand of the AT-rich DNA unwinding element (DUE), permitting loading of DNA polymerase. After initiation quickly degrades to an ADP-DnaA complex that is not apt for DNA replication. Binds acidic phospholipids. This chain is Chromosomal replication initiator protein DnaA, found in Campylobacter jejuni subsp. jejuni serotype O:23/36 (strain 81-176).